Consider the following 408-residue polypeptide: UPF0761 membrane protein NMCC_0461 (408 aa).

6 helical membrane-spanning segments follow: residues 43 to 63 (LLAL…FPVF), 100 to 120 (LTAI…RTID), 139 to 159 (FLVY…GISF), 176 to 196 (WSGA…LWGL), 210 to 230 (AFVG…LFTW), and 248 to 268 (VPFF…GAVL).

The protein belongs to the UPF0761 family.

The protein resides in the cell inner membrane. The sequence is that of UPF0761 membrane protein NMCC_0461 from Neisseria meningitidis serogroup C (strain 053442).